Consider the following 97-residue polypeptide: Vitelline membrane protein 15a-2 (97 aa).

The first 19 residues, 1–19 (MNKIIAALVLFTAVIGALA), serve as a signal peptide directing secretion. The required for binding to the gut receptor stretch occupies residues 20–23 (DYPA). A disordered region spans residues 26-46 (PPPPKPYHAPPPPPYHAPPHH). Residues 61-97 (KAPAAKCGANLLVGCAPSVAHVPCVPVHPHPPPPAHY) form the VM domain.

It belongs to the vitelline membrane protein family. Expressed in the anterior region of the follicle cells.

The protein resides in the secreted. Has an oostatic activity. Inhibits trypsin biosynthesis in the midgut epithelial cells which indirectly reduces the vitellogenin concentration in the hemolymph resulting in inhibition of oocyte development. The polypeptide is Vitelline membrane protein 15a-2 (15a-2) (Aedes aegypti (Yellowfever mosquito)).